Here is an 824-residue protein sequence, read N- to C-terminus: Leucine--tRNA ligase (824 aa).

The 'HIGH' region signature appears at 41-51; it reads PYPSGTLHVGH. The 'KMSKS' region motif lies at 580-584; it reads KMSKS. Lysine 583 contributes to the ATP binding site.

Belongs to the class-I aminoacyl-tRNA synthetase family.

The protein localises to the cytoplasm. The enzyme catalyses tRNA(Leu) + L-leucine + ATP = L-leucyl-tRNA(Leu) + AMP + diphosphate. In Thermotoga maritima (strain ATCC 43589 / DSM 3109 / JCM 10099 / NBRC 100826 / MSB8), this protein is Leucine--tRNA ligase.